A 385-amino-acid chain; its full sequence is Flavin-dependent monooxygenase (385 aa).

Residues 12 to 15, 34 to 36, 44 to 47, Arg-105, Tyr-267, Asp-289, and 296 to 302 each bind FAD; these read ASIA, EKN, YAID, and PLSGQGT.

Belongs to the aromatic-ring hydroxylase family. FAD serves as cofactor.

The enzyme catalyses 7-chlorotetracycline + NADPH + O2 + H(+) = (1S,10S,10aS)-3-(CONH2)-9-Cl-1-(Me2N)-3,3a,4,10-(HO)4-10-Me-2,5-dioxo-1H,10aH,11H,11aH-cyclopenta[b]anthracen-6-olate + CO + NADP(+) + H2O. It catalyses the reaction a tetracycline + NADPH + O2 + H(+) = a (1S,10aS)-3-(CONH2)-1-(Me2N)-3,3a,4,6-(HO)4-2,5-dioxo-1H,10aH,11H,11aH-cyclopenta[b]anthracene + CO + NADP(+) + H2O. With respect to regulation, inhibited by anhydrotetracycline. In terms of biological role, an FAD-requiring monooxygenase active on tetracycline antibiotic and some of its derivatives, which leads to their inactivation. Expression in E.coli confers high resistance to oxytetracycline, slightly less resistance to tetracycline, moderate resistance to minocycline but no resistance to tigecycline. Degrades tetracycline and oxytetracycline; the reaction requires NADPH. Degrades and confers resistance to chlortetracycline. The sequence is that of Flavin-dependent monooxygenase from Unknown prokaryotic organism.